A 202-amino-acid chain; its full sequence is Imidazoleglycerol-phosphate dehydratase (202 aa).

It belongs to the imidazoleglycerol-phosphate dehydratase family.

It is found in the cytoplasm. It carries out the reaction D-erythro-1-(imidazol-4-yl)glycerol 3-phosphate = 3-(imidazol-4-yl)-2-oxopropyl phosphate + H2O. It participates in amino-acid biosynthesis; L-histidine biosynthesis; L-histidine from 5-phospho-alpha-D-ribose 1-diphosphate: step 6/9. In Brucella anthropi (strain ATCC 49188 / DSM 6882 / CCUG 24695 / JCM 21032 / LMG 3331 / NBRC 15819 / NCTC 12168 / Alc 37) (Ochrobactrum anthropi), this protein is Imidazoleglycerol-phosphate dehydratase.